A 354-amino-acid polypeptide reads, in one-letter code: Methylthioribose-1-phosphate isomerase (354 aa).

The Proton donor role is filled by D246.

The protein belongs to the eIF-2B alpha/beta/delta subunits family. MtnA subfamily.

The protein resides in the cytoplasm. Its subcellular location is the nucleus. The catalysed reaction is 5-(methylsulfanyl)-alpha-D-ribose 1-phosphate = 5-(methylsulfanyl)-D-ribulose 1-phosphate. Its pathway is amino-acid biosynthesis; L-methionine biosynthesis via salvage pathway; L-methionine from S-methyl-5-thio-alpha-D-ribose 1-phosphate: step 1/6. Its function is as follows. Catalyzes the interconversion of methylthioribose-1-phosphate (MTR-1-P) into methylthioribulose-1-phosphate (MTRu-1-P). In Xenopus tropicalis (Western clawed frog), this protein is Methylthioribose-1-phosphate isomerase (mri1).